Consider the following 594-residue polypeptide: Glutamate decarboxylase 1 (594 aa).

The span at 1 to 13 (MASSTPSSSATSS) shows a compositional bias: low complexity. Residues 1 to 22 (MASSTPSSSATSSNAGADPNTA) are disordered. Serine 78 carries the phosphoserine modification. 190–192 (QLS) serves as a coordination point for 4-aminobutanoate. Lysine 405 is modified (N6-(pyridoxal phosphate)lysine). Arginine 567 serves as a coordination point for 4-aminobutanoate.

The protein belongs to the group II decarboxylase family. In terms of assembly, homodimer. Pyridoxal 5'-phosphate is required as a cofactor.

It catalyses the reaction L-glutamate + H(+) = 4-aminobutanoate + CO2. Its function is as follows. Catalyzes the synthesis of the inhibitory neurotransmitter gamma-aminobutyric acid (GABA) with pyridoxal 5'-phosphate as cofactor. In Canis lupus familiaris (Dog), this protein is Glutamate decarboxylase 1 (GAD1).